The chain runs to 82 residues: Lysis inhibition accessory protein (82 aa).

It belongs to the T4likevirus lysis inhibition accessory protein rIII family. In terms of assembly, homooligomer. Interacts with holin (via N-terminus).

Probably binds to the cytoplasmic part of the holin during lysis inhibition and stabilizes the holin-antiholin complex thereby resulting in a robust block of the hole formation. The polypeptide is Lysis inhibition accessory protein (rIII) (Escherichia coli (Bacteriophage T4)).